The following is a 331-amino-acid chain: Ribosomal RNA small subunit methyltransferase H (331 aa).

S-adenosyl-L-methionine contacts are provided by residues 39–41 (GGY), D56, F83, D100, and Q107.

This sequence belongs to the methyltransferase superfamily. RsmH family.

Its subcellular location is the cytoplasm. The enzyme catalyses cytidine(1402) in 16S rRNA + S-adenosyl-L-methionine = N(4)-methylcytidine(1402) in 16S rRNA + S-adenosyl-L-homocysteine + H(+). Its function is as follows. Specifically methylates the N4 position of cytidine in position 1402 (C1402) of 16S rRNA. The polypeptide is Ribosomal RNA small subunit methyltransferase H (Bartonella bacilliformis (strain ATCC 35685 / KC583 / Herrer 020/F12,63)).